The chain runs to 204 residues: Thymidine kinase (204 aa).

Residues glycine 18–threonine 25 and aspartate 91–glutamine 94 each bind ATP. Catalysis depends on glutamate 92, which acts as the Proton acceptor. The Zn(2+) site is built by cysteine 148, cysteine 151, cysteine 180, and histidine 183.

Belongs to the thymidine kinase family. As to quaternary structure, homotetramer.

The protein resides in the cytoplasm. The enzyme catalyses thymidine + ATP = dTMP + ADP + H(+). The sequence is that of Thymidine kinase from Bdellovibrio bacteriovorus (strain ATCC 15356 / DSM 50701 / NCIMB 9529 / HD100).